Reading from the N-terminus, the 294-residue chain is Ribosomal protein L11 methyltransferase (294 aa).

The S-adenosyl-L-methionine site is built by T145, G166, D188, and N227.

Belongs to the methyltransferase superfamily. PrmA family.

It localises to the cytoplasm. It carries out the reaction L-lysyl-[protein] + 3 S-adenosyl-L-methionine = N(6),N(6),N(6)-trimethyl-L-lysyl-[protein] + 3 S-adenosyl-L-homocysteine + 3 H(+). Methylates ribosomal protein L11. The polypeptide is Ribosomal protein L11 methyltransferase (Hydrogenovibrio crunogenus (strain DSM 25203 / XCL-2) (Thiomicrospira crunogena)).